The sequence spans 463 residues: NADH dehydrogenase [ubiquinone] iron-sulfur protein 2, mitochondrial (463 aa).

A mitochondrion-targeting transit peptide spans 1–33; it reads MAALRALRCLRGVGAPVLRPGSGIRLPSQPSRG. N6-acetyllysine is present on K62. R118 bears the Symmetric dimethylarginine mark. The [4Fe-4S] cluster site is built by C326, C332, and C347.

Belongs to the complex I 49 kDa subunit family. Core subunit of respiratory chain NADH dehydrogenase (Complex I) which is composed of 45 different subunits. Component of the iron-sulfur (IP) fragment of the enzyme. Interacts with NDUFAF3. Interacts with NDUFAF7. Interacts with CERS2. Requires [4Fe-4S] cluster as cofactor. Dimethylation at Arg-118 by NDUFAF7 takes place after NDUFS2 assembles into the complex I, leading to stabilize the early intermediate complex.

It is found in the mitochondrion inner membrane. The enzyme catalyses a ubiquinone + NADH + 5 H(+)(in) = a ubiquinol + NAD(+) + 4 H(+)(out). Functionally, core subunit of the mitochondrial membrane respiratory chain NADH dehydrogenase (Complex I) which catalyzes electron transfer from NADH through the respiratory chain, using ubiquinone as an electron acceptor. Essential for the catalytic activity and assembly of complex I. Redox-sensitive, critical component of the oxygen-sensing pathway in the pulmonary vasculature which plays a key role in acute pulmonary oxygen-sensing and hypoxic pulmonary vasoconstriction. Plays an important role in carotid body sensing of hypoxia. Essential for glia-like neural stem and progenitor cell proliferation, differentiation and subsequent oligodendrocyte or neuronal maturation. In Mus musculus (Mouse), this protein is NADH dehydrogenase [ubiquinone] iron-sulfur protein 2, mitochondrial (Ndufs2).